Here is a 100-residue protein sequence, read N- to C-terminus: uncharacterized protein (100 aa).

The disordered stretch occupies residues 78 to 100 (KPYRTESGTSSSNRMMLPPRQHV).

This is an uncharacterized protein from Caenorhabditis elegans.